Here is a 129-residue protein sequence, read N- to C-terminus: Fluoride-specific ion channel FluC (129 aa).

A run of 4 helical transmembrane segments spans residues 4–24, 30–50, 63–83, and 95–115; these read VLIV…LGEW, GFPT…GWLL, WSLL…TFSV, and IVAS…AYIG. Positions 73 and 76 each coordinate Na(+).

This sequence belongs to the fluoride channel Fluc/FEX (TC 1.A.43) family.

It localises to the cell membrane. It catalyses the reaction fluoride(in) = fluoride(out). Na(+) is not transported, but it plays an essential structural role and its presence is essential for fluoride channel function. Functionally, fluoride-specific ion channel. Important for reducing fluoride concentration in the cell, thus reducing its toxicity. In Oceanobacillus iheyensis (strain DSM 14371 / CIP 107618 / JCM 11309 / KCTC 3954 / HTE831), this protein is Fluoride-specific ion channel FluC.